The sequence spans 285 residues: Small ribosomal subunit biogenesis GTPase RsgA (285 aa).

Residues Asp-56–Ile-217 form the CP-type G domain. GTP is bound by residues Asn-105 to Asp-108 and Gly-159 to Ser-167. The Zn(2+) site is built by Cys-241, Cys-246, His-248, and Cys-254.

Belongs to the TRAFAC class YlqF/YawG GTPase family. RsgA subfamily. Monomer. Associates with 30S ribosomal subunit, binds 16S rRNA. Zn(2+) is required as a cofactor.

Its subcellular location is the cytoplasm. Functionally, one of several proteins that assist in the late maturation steps of the functional core of the 30S ribosomal subunit. Helps release RbfA from mature subunits. May play a role in the assembly of ribosomal proteins into the subunit. Circularly permuted GTPase that catalyzes slow GTP hydrolysis, GTPase activity is stimulated by the 30S ribosomal subunit. This Fusobacterium nucleatum subsp. nucleatum (strain ATCC 25586 / DSM 15643 / BCRC 10681 / CIP 101130 / JCM 8532 / KCTC 2640 / LMG 13131 / VPI 4355) protein is Small ribosomal subunit biogenesis GTPase RsgA.